The chain runs to 359 residues: Alanine racemase (359 aa).

Lys35 functions as the Proton acceptor; specific for D-alanine in the catalytic mechanism. The residue at position 35 (Lys35) is an N6-(pyridoxal phosphate)lysine. Arg130 is a binding site for substrate. The active-site Proton acceptor; specific for L-alanine is the Tyr255. Residue Met303 coordinates substrate.

This sequence belongs to the alanine racemase family. Pyridoxal 5'-phosphate serves as cofactor.

It carries out the reaction L-alanine = D-alanine. Its pathway is amino-acid biosynthesis; D-alanine biosynthesis; D-alanine from L-alanine: step 1/1. Its function is as follows. Catalyzes the interconversion of L-alanine and D-alanine. May also act on other amino acids. The chain is Alanine racemase (alr) from Janthinobacterium sp. (strain Marseille) (Minibacterium massiliensis).